A 661-amino-acid polypeptide reads, in one-letter code: Heme transporter BhuA (661 aa).

The first 23 residues, 1-23 (MKFTRTLVLASTFLLATVATSQA), serve as a signal peptide directing secretion. Residues 48–159 (KDNIEATGGT…AAGAIRYETV (112 aa)) form the TBDR plug domain. Positions 170–661 (TFGARIIGSY…TFTFQTAFKF (492 aa)) constitute a TBDR beta-barrel domain.

The protein belongs to the TonB-dependent receptor family.

It localises to the cell outer membrane. Heme transporter. The chain is Heme transporter BhuA (bhuA) from Brucella suis biovar 1 (strain 1330).